Here is a 127-residue protein sequence, read N- to C-terminus: Large ribosomal subunit protein bL12 (127 aa).

This sequence belongs to the bacterial ribosomal protein bL12 family. In terms of assembly, homodimer. Part of the ribosomal stalk of the 50S ribosomal subunit. Forms a multimeric L10(L12)X complex, where L10 forms an elongated spine to which 2 to 4 L12 dimers bind in a sequential fashion. Binds GTP-bound translation factors.

In terms of biological role, forms part of the ribosomal stalk which helps the ribosome interact with GTP-bound translation factors. Is thus essential for accurate translation. The polypeptide is Large ribosomal subunit protein bL12 (Phytoplasma mali (strain AT)).